Consider the following 260-residue polypeptide: Outer membrane protein assembly factor BamD (260 aa).

The N-terminal stretch at 1 to 19 (MRKLKSFTFIALTAFAITA) is a signal peptide. A lipid anchor (N-palmitoyl cysteine) is attached at Cys-20. Cys-20 carries S-diacylglycerol cysteine lipidation.

This sequence belongs to the BamD family. Part of the Bam complex.

The protein resides in the cell outer membrane. Functionally, part of the outer membrane protein assembly complex, which is involved in assembly and insertion of beta-barrel proteins into the outer membrane. The sequence is that of Outer membrane protein assembly factor BamD from Pasteurella multocida (strain Pm70).